The sequence spans 353 residues: Zinc transporter 5 (353 aa).

The signal sequence occupies residues 1 to 27; the sequence is MATAAMTKVFVLLFLVAACYLPAHAAA. The Extracellular portion of the chain corresponds to 28-48; it reads AECDCATDTAGRDKAQALRLK. A helical membrane pass occupies residues 49-69; sequence VIAIFCILAGSTVGAALPSLG. Topologically, residues 70 to 86 are cytoplasmic; the sequence is GRFPAIQPETDVFLSVK. The chain crosses the membrane as a helical span at residues 87–107; it reads AFAGGVILATGLVHILPAAFE. Over 108–121 the chain is Extracellular; sequence ALSSPCLVGGPWKR. The chain crosses the membrane as a helical span at residues 122 to 142; sequence FPFAGMVAMVSAIGTLIVDTV. Residues 143–198 are Cytoplasmic-facing; that stretch reads ATGYFHRTDAKRKAAAVADEPADDLEASDEHSHGHAHGMSVMSVAPAGEEDLVRHR. A helical transmembrane segment spans residues 199 to 219; it reads VISQVLELGVVVHSLIIGMSL. The Extracellular portion of the chain corresponds to 220–230; it reads GASDFPSTVRP. The helical transmembrane segment at 231–251 threads the bilayer; sequence LVPALTFHQFFEGIGLGGCIV. Over 252–260 the chain is Cytoplasmic; sequence QAKFRVRSV. The helical transmembrane segment at 261-281 threads the bilayer; it reads VTMALFFSLTTPAGIVVGIGI. The Extracellular portion of the chain corresponds to 282 to 292; the sequence is SSVYDANSPTA. A helical transmembrane segment spans residues 293 to 313; the sequence is LVVQGLLEAAAAGILVYMALV. Over 314–332 the chain is Cytoplasmic; that stretch reads DILAEDFMKTKVQRRGRLQ. Residues 333-353 form a helical membrane-spanning segment; sequence LAMNVALLLGAGLMSMIAIWA.

This sequence belongs to the ZIP transporter (TC 2.A.5) family.

It is found in the cell membrane. Zinc transporter that mediates zinc uptake from the rhizosphere and may be responsible for the translocation of zinc within the plant. This is Zinc transporter 5 (ZIP5) from Oryza sativa subsp. japonica (Rice).